Reading from the N-terminus, the 394-residue chain is Small ribosomal subunit protein uS2m (394 aa).

Residues 1 to 25 (MQRHVFARNFRRLSLLRNPSLTKRF) constitute a mitochondrion transit peptide.

The protein belongs to the universal ribosomal protein uS2 family. In terms of assembly, component of the mitochondrial small ribosomal subunit (mt-SSU). Mature yeast 74S mitochondrial ribosomes consist of a small (37S) and a large (54S) subunit. The 37S small subunit contains a 15S ribosomal RNA (15S mt-rRNA) and 34 different proteins. The 54S large subunit contains a 21S rRNA (21S mt-rRNA) and 46 different proteins.

It localises to the mitochondrion. In terms of biological role, component of the mitochondrial ribosome (mitoribosome), a dedicated translation machinery responsible for the synthesis of mitochondrial genome-encoded proteins, including at least some of the essential transmembrane subunits of the mitochondrial respiratory chain. The mitoribosomes are attached to the mitochondrial inner membrane and translation products are cotranslationally integrated into the membrane. This chain is Small ribosomal subunit protein uS2m (MRP4), found in Saccharomyces cerevisiae (strain ATCC 204508 / S288c) (Baker's yeast).